A 334-amino-acid chain; its full sequence is MLLIGVAGTELSAQERDWLQHDAVAGVVLFKRNFGSRSQVAELSAAIRAAAPRPVLICVDQEGGRVQRFREGFSALAPLQSFGAQYAQAPEAALAAARAHAQLMASEVRASGVDLSFAPVVDLGRGNRAIGDRAFSDDPQIVATFTRAYVQALHGAGMAATLKHFPGHGTVLEDTHVDHASDPRPLEALQAEDLVPFVAGIEAGADAVMMAHVVYPQVAPEPAGYSQRWIEQILRGQMGFRGVVFSDDIGMAASLSAGGVAGRVHAHLDAGCDVVLVCHPELVAESLQAVQGRRLNTAALIGLIGRGALGWDGLLAGTDASFTAPLSAHFGTTA.

Substrate-binding positions include aspartate 60, arginine 68, arginine 133, and 163-164 (KH). Histidine 176 acts as the Proton donor/acceptor in catalysis. Aspartate 247 acts as the Nucleophile in catalysis.

Belongs to the glycosyl hydrolase 3 family. NagZ subfamily.

It is found in the cytoplasm. It catalyses the reaction Hydrolysis of terminal non-reducing N-acetyl-D-hexosamine residues in N-acetyl-beta-D-hexosaminides.. It functions in the pathway cell wall biogenesis; peptidoglycan recycling. In terms of biological role, plays a role in peptidoglycan recycling by cleaving the terminal beta-1,4-linked N-acetylglucosamine (GlcNAc) from peptide-linked peptidoglycan fragments, giving rise to free GlcNAc, anhydro-N-acetylmuramic acid and anhydro-N-acetylmuramic acid-linked peptides. In Xanthomonas oryzae pv. oryzae (strain KACC10331 / KXO85), this protein is Beta-hexosaminidase.